We begin with the raw amino-acid sequence, 236 residues long: ATP synthase subunit a (236 aa).

5 consecutive transmembrane segments (helical) span residues 17 to 37 (LANV…AVLA), 80 to 100 (MTLI…SVVI), 114 to 134 (VVTL…GIKL), 179 to 199 (ILLA…IAAI), and 208 to 228 (FSIF…MVYM).

The protein belongs to the ATPase A chain family. In terms of assembly, F-type ATPases have 2 components, CF(1) - the catalytic core - and CF(0) - the membrane proton channel. CF(1) has five subunits: alpha(3), beta(3), gamma(1), delta(1), epsilon(1). CF(0) has three main subunits: a(1), b(2) and c(9-12). The alpha and beta chains form an alternating ring which encloses part of the gamma chain. CF(1) is attached to CF(0) by a central stalk formed by the gamma and epsilon chains, while a peripheral stalk is formed by the delta and b chains.

The protein resides in the cell membrane. In terms of biological role, key component of the proton channel; it plays a direct role in the translocation of protons across the membrane. This chain is ATP synthase subunit a, found in Anoxybacillus flavithermus (strain DSM 21510 / WK1).